We begin with the raw amino-acid sequence, 34 residues long: Photosystem II reaction center protein M (34 aa).

Residues 5–25 (ILAFIATALFILVPTAFLLII) traverse the membrane as a helical segment.

Belongs to the PsbM family. As to quaternary structure, PSII is composed of 1 copy each of membrane proteins PsbA, PsbB, PsbC, PsbD, PsbE, PsbF, PsbH, PsbI, PsbJ, PsbK, PsbL, PsbM, PsbT, PsbX, PsbY, PsbZ, Psb30/Ycf12, at least 3 peripheral proteins of the oxygen-evolving complex and a large number of cofactors. It forms dimeric complexes.

The protein localises to the plastid. It localises to the chloroplast thylakoid membrane. Its function is as follows. One of the components of the core complex of photosystem II (PSII). PSII is a light-driven water:plastoquinone oxidoreductase that uses light energy to abstract electrons from H(2)O, generating O(2) and a proton gradient subsequently used for ATP formation. It consists of a core antenna complex that captures photons, and an electron transfer chain that converts photonic excitation into a charge separation. This subunit is found at the monomer-monomer interface. This chain is Photosystem II reaction center protein M, found in Buxus microphylla (Littleleaf boxwood).